The sequence spans 150 residues: MIFTKVDALVKDIDVDKYHIETVILSSDDLNKKIIRVKSDHGNEFGIRLDKGQKLQNGSAFFIDDHHVLVIGVESQDLIVISPKDMDEMGITAHILGNTHKPIEVKDAKIYLEVDPVVEQVLTQKEIAYTIEEVVLDKPLRHVNLTAHEH.

Belongs to the UreE family.

The protein resides in the cytoplasm. Its function is as follows. Involved in urease metallocenter assembly. Binds nickel. Probably functions as a nickel donor during metallocenter assembly. This Streptococcus vestibularis protein is Urease accessory protein UreE.